Reading from the N-terminus, the 745-residue chain is Pentatricopeptide repeat-containing protein At1g71420 (745 aa).

13 PPR repeats span residues 58 to 88, 95 to 125, 126 to 160, 191 to 224, 225 to 259, 260 to 296, 301 to 332, 334 to 367, 368 to 402, 403 to 437, 438 to 464, 466 to 496, and 502 to 532; these read SQQA…MLSH, NVIL…MPER, NVVS…CFPN, SIYV…IKFK, NLVT…GVGF, DRAT…TVKS, QTEV…MSHC, DIVA…KLSP, DWYT…GFLA, DTVL…DVVS, WNSM…MDIN, DSAT…MFEK, and QLNH…MPMD. The type E motif stretch occupies residues 537–613; the sequence is VWIALLGSCR…EPDLSWTEIG (77 aa). Residues 614–644 form a type E(+) motif region; the sequence is NKVHEFASGGRHRPDKEAVYRELKRLISWLK. Residues 645 to 745 form a type DYW motif region; the sequence is EMGYVPEMRS…DSSCSCNDYW (101 aa).

Belongs to the PPR family. PCMP-H subfamily.

The protein is Pentatricopeptide repeat-containing protein At1g71420 (PCMP-H70) of Arabidopsis thaliana (Mouse-ear cress).